Consider the following 354-residue polypeptide: Uroporphyrinogen decarboxylase (354 aa).

Residues Arg27–Arg31, Asp77, Tyr154, Ser209, and His327 contribute to the substrate site.

It belongs to the uroporphyrinogen decarboxylase family. In terms of assembly, homodimer.

The protein localises to the cytoplasm. It catalyses the reaction uroporphyrinogen III + 4 H(+) = coproporphyrinogen III + 4 CO2. It functions in the pathway porphyrin-containing compound metabolism; protoporphyrin-IX biosynthesis; coproporphyrinogen-III from 5-aminolevulinate: step 4/4. In terms of biological role, catalyzes the decarboxylation of four acetate groups of uroporphyrinogen-III to yield coproporphyrinogen-III. This chain is Uroporphyrinogen decarboxylase, found in Shewanella sp. (strain ANA-3).